The following is a 326-amino-acid chain: Phosphatidylinositol:ceramide inositolphosphotransferase (326 aa).

6 consecutive transmembrane segments (helical) span residues 33 to 53 (LLLA…GVHY), 82 to 102 (SVFT…FIYH), 115 to 135 (VLAF…STQL), 169 to 189 (VLFG…LVFV), 199 to 219 (RLIK…IIAS), and 222 to 242 (HYSV…FFID). Residue H181 is part of the active site. Catalysis depends on residues H222 and D226. The segment at 306-326 (MNGKHGEDINHTLSDATPNGT) is disordered. The segment covering 316–326 (HTLSDATPNGT) has biased composition (polar residues).

It belongs to the sphingomyelin synthase family.

It localises to the golgi apparatus. Its subcellular location is the trans-Golgi network membrane. In terms of biological role, catalyzes the transfer of the phosphorylinositol group from phosphatidylinositol (PI) to phytoceramide, an essential step in sphingolipid biosynthesis. May play an important role in modulating plant programmed cell death (PCD) associated with defense (e.g. toward Golovinomyces cichoracearum) by promoting sphingolipid metabolism and regulating ceramide accumulation. The sequence is that of Phosphatidylinositol:ceramide inositolphosphotransferase (ERH1) from Oryza sativa subsp. indica (Rice).